A 308-amino-acid chain; its full sequence is Oxygen-dependent coproporphyrinogen-III oxidase (308 aa).

Serine 97 contributes to the substrate binding site. A divalent metal cation-binding residues include histidine 101 and histidine 111. The active-site Proton donor is the histidine 111. 113–115 (NVR) lines the substrate pocket. Positions 153 and 183 each coordinate a divalent metal cation. The important for dimerization stretch occupies residues 248–283 (YVEFNLVWDRGTHFGLQSGGRTESILMSMPPLASWS). 266 to 268 (GGR) serves as a coordination point for substrate.

It belongs to the aerobic coproporphyrinogen-III oxidase family. As to quaternary structure, homodimer. It depends on a divalent metal cation as a cofactor.

The protein localises to the cytoplasm. The enzyme catalyses coproporphyrinogen III + O2 + 2 H(+) = protoporphyrinogen IX + 2 CO2 + 2 H2O. Its pathway is porphyrin-containing compound metabolism; protoporphyrin-IX biosynthesis; protoporphyrinogen-IX from coproporphyrinogen-III (O2 route): step 1/1. Its function is as follows. Involved in the heme biosynthesis. Catalyzes the aerobic oxidative decarboxylation of propionate groups of rings A and B of coproporphyrinogen-III to yield the vinyl groups in protoporphyrinogen-IX. In Polaromonas sp. (strain JS666 / ATCC BAA-500), this protein is Oxygen-dependent coproporphyrinogen-III oxidase.